A 250-amino-acid chain; its full sequence is uncharacterized protein (250 aa).

A signal peptide spans 1-19; sequence MAKPRNAAESKAAKAQANA. Helical transmembrane passes span 51-71 and 73-93; these read IGAFLLIVGASVGVGVWAGGF and MFTMIPLGVLLGALVAFVIFG. The interval 226 to 250 is disordered; sequence AGVMPKGPLPTTAKMRSVQRTVRRK.

Its subcellular location is the cell membrane. This is an uncharacterized protein from Mycobacterium tuberculosis (strain CDC 1551 / Oshkosh).